The chain runs to 154 residues: Transcription antitermination protein NusB (154 aa).

It belongs to the NusB family.

Its function is as follows. Involved in transcription antitermination. Required for transcription of ribosomal RNA (rRNA) genes. Binds specifically to the boxA antiterminator sequence of the ribosomal RNA (rrn) operons. This is Transcription antitermination protein NusB from Bordetella parapertussis (strain 12822 / ATCC BAA-587 / NCTC 13253).